We begin with the raw amino-acid sequence, 237 residues long: Cytidylate kinase (237 aa).

ATP is bound at residue 15 to 23 (GPSGSGKGT).

Belongs to the cytidylate kinase family. Type 1 subfamily.

The protein resides in the cytoplasm. The enzyme catalyses CMP + ATP = CDP + ADP. The catalysed reaction is dCMP + ATP = dCDP + ADP. The chain is Cytidylate kinase from Coxiella burnetii (strain RSA 493 / Nine Mile phase I).